Consider the following 489-residue polypeptide: Para-nitrobenzyl esterase (489 aa).

The active-site Acyl-ester intermediate is serine 189. At serine 189 the chain carries Phosphoserine. Residues glutamate 310 and histidine 399 each act as charge relay system in the active site.

It belongs to the type-B carboxylesterase/lipase family. Monomer.

Functionally, catalyzes hydrolysis of several beta-lactam antibiotic PNB esters to the corresponding free acid and PNB alcohol. In Bacillus subtilis (strain 168), this protein is Para-nitrobenzyl esterase (pnbA).